A 587-amino-acid chain; its full sequence is Putative adhesin (587 aa).

The signal sequence occupies residues 1-19 (MKFAISTLLIILQAAAVFA). C211 and C261 are oxidised to a cystine. Residue N239 is glycosylated (N-linked (GlcNAc...) asparagine). Tandem repeats lie at residues 432–455 (IVTV…TYTK), 466–489 (IVTV…TYTK), 491–512 (PEIV…YHDV), and 513–531 (PEVV…TTTY). A 4 X 24 AA approximate tandem repeats, Thr-rich region spans residues 432-531 (IVTVITKEGG…EGGEKVTTTY (100 aa)). S562 is lipidated: GPI-anchor amidated serine. Residues 563-587 (EAQVNLGSKSAVGLLAIVPMLFLAI) constitute a propeptide, removed in mature form.

The GPI-anchor is attached to the protein in the endoplasmic reticulum and serves to target the protein to the cell surface. There, the glucosamine-inositol phospholipid moiety is cleaved off and the GPI-modified mannoprotein is covalently attached via its lipidless GPI glycan remnant to the 1,6-beta-glucan of the outer cell wall layer.

The protein localises to the cell membrane. It is found in the secreted. Its subcellular location is the cell wall. In terms of biological role, putative adhesion protein. May be involved in cell-cell interaction, interacting with other proteins by salt bridges and hydrogen bonds. The chain is Putative adhesin from Komagataella phaffii (strain ATCC 76273 / CBS 7435 / CECT 11047 / NRRL Y-11430 / Wegner 21-1) (Yeast).